The following is a 123-amino-acid chain: Late histone H2B.L3 (123 aa).

Over residues 1-10 (MPAKAQAAGK) the composition is skewed to low complexity. Positions 1-32 (MPAKAQAAGKKGSKKAKAPKPSGDKKRRRKRK) are disordered. O-linked (GlcNAc) serine glycosylation is present at Ser-110. A Glycyl lysine isopeptide (Lys-Gly) (interchain with G-Cter in ubiquitin) cross-link involves residue Lys-118.

This sequence belongs to the histone H2B family. The nucleosome is a histone octamer containing two molecules each of H2A, H2B, H3 and H4 assembled in one H3-H4 heterotetramer and two H2A-H2B heterodimers. The octamer wraps approximately 147 bp of DNA. Post-translationally, monoubiquitination of Lys-118 gives a specific tag for epigenetic transcriptional activation and is also prerequisite for histone H3 'Lys-4' and 'Lys-79' methylation. In terms of processing, glcNAcylation at Ser-110 promotes monoubiquitination of Lys-118. It fluctuates in response to extracellular glucose, and associates with transcribed genes.

It localises to the nucleus. The protein localises to the chromosome. Its function is as follows. Core component of nucleosome. Nucleosomes wrap and compact DNA into chromatin, limiting DNA accessibility to the cellular machineries which require DNA as a template. Histones thereby play a central role in transcription regulation, DNA repair, DNA replication and chromosomal stability. DNA accessibility is regulated via a complex set of post-translational modifications of histones, also called histone code, and nucleosome remodeling. This Strongylocentrotus purpuratus (Purple sea urchin) protein is Late histone H2B.L3.